The following is a 225-amino-acid chain: 7-cyano-7-deazaguanine synthase (225 aa).

9–19 (YSGGLDSTTCL) serves as a coordination point for ATP. Positions 188, 198, 201, and 204 each coordinate Zn(2+).

Belongs to the QueC family. Requires Zn(2+) as cofactor.

The enzyme catalyses 7-carboxy-7-deazaguanine + NH4(+) + ATP = 7-cyano-7-deazaguanine + ADP + phosphate + H2O + H(+). The protein operates within purine metabolism; 7-cyano-7-deazaguanine biosynthesis. Its function is as follows. Catalyzes the ATP-dependent conversion of 7-carboxy-7-deazaguanine (CDG) to 7-cyano-7-deazaguanine (preQ(0)). The chain is 7-cyano-7-deazaguanine synthase from Citrifermentans bemidjiense (strain ATCC BAA-1014 / DSM 16622 / JCM 12645 / Bem) (Geobacter bemidjiensis).